We begin with the raw amino-acid sequence, 310 residues long: Glycine-rich RNA-binding protein RZ1C (310 aa).

Positions 7 to 85 (SRIFVGGLSP…RVISVNRAEP (79 aa)) constitute an RRM domain. The residue at position 15 (serine 15) is a Phosphoserine. Residues 82-120 (RAEPKLGRDDGESHGSRGGRDSGYSIAGKGSFGGGGGGG) form a disordered region. Basic and acidic residues predominate over residues 83 to 101 (AEPKLGRDDGESHGSRGGR). Over residues 111 to 120 (GSFGGGGGGG) the composition is skewed to gly residues. The segment at 128 to 143 (CFKCGRVGHWARDCPS) adopts a CCHC-type zinc-finger fold. The tract at residues 224-310 (RFAGGDRYSR…YPSSSTFDRY (87 aa)) is disordered. Basic and acidic residues-rich tracts occupy residues 226 to 236 (AGGDRYSRGSD) and 244 to 253 (DKARSFERDI). A compositionally biased stretch (gly residues) spans 261–273 (RYGGGRAGGPIRG). Serine 295 bears the Phosphoserine mark.

As to expression, expressed in roots, rosette and cauline leaves, stems, floral buds and flowers.

The protein localises to the nucleus. Functionally, binds RNA and DNA sequences non-specifically. May be involved in tolerance to cold stress. This Arabidopsis thaliana (Mouse-ear cress) protein is Glycine-rich RNA-binding protein RZ1C.